The sequence spans 116 residues: Small ribosomal subunit protein bS16 (116 aa).

It belongs to the bacterial ribosomal protein bS16 family.

This chain is Small ribosomal subunit protein bS16, found in Chlamydia muridarum (strain MoPn / Nigg).